Reading from the N-terminus, the 166-residue chain is Peptidoglycan-associated lipoprotein (166 aa).

A signal peptide spans 1 to 21 (MEMLKFGKFAALALAMAVAVG). Cysteine 22 carries the N-palmitoyl cysteine lipid modification. Cysteine 22 is lipidated: S-diacylglycerol cysteine. The 113-residue stretch at 54-166 (SEEAALRAIT…AQNRRVELRK (113 aa)) folds into the OmpA-like domain. A disordered region spans residues 147–166 (VATGNDEQSWAQNRRVELRK).

It belongs to the Pal lipoprotein family. In terms of assembly, the Tol-Pal system is composed of five core proteins: the inner membrane proteins TolA, TolQ and TolR, the periplasmic protein TolB and the outer membrane protein Pal. They form a network linking the inner and outer membranes and the peptidoglycan layer.

Its subcellular location is the cell outer membrane. In terms of biological role, part of the Tol-Pal system, which plays a role in outer membrane invagination during cell division and is important for maintaining outer membrane integrity. In Pseudomonas putida (Arthrobacter siderocapsulatus), this protein is Peptidoglycan-associated lipoprotein.